The chain runs to 102 residues: MTKSELIELLIDQQSHLPVKDVEQAIKAMLEHMSDSLANGERIEIRGFGSFSLHYRAPRIGRNPKTGESVELSAKYVPHFKPGKELRELVNLPENSEINELN.

This sequence belongs to the bacterial histone-like protein family. In terms of assembly, heterodimer of an alpha and a beta chain.

In terms of biological role, this protein is one of the two subunits of integration host factor, a specific DNA-binding protein that functions in genetic recombination as well as in transcriptional and translational control. The sequence is that of Integration host factor subunit beta from Marinomonas sp. (strain MWYL1).